The chain runs to 245 residues: MSPARGRAACKTCRSRKQKCDGIRPACSRCRSLGLQCTWPTVLKRGPPKGYTKALEARLAETELVLIRLLHATNDEGLLARAFDGDTQKRAHKRFGERNTELKSSVIGEHKMLALMDHWERFPLRTADDVRQWIGEVSKTSMMQGEGTNQSNEKTRGLLRVESSSGNADYQHEDEVQSPAGAGDDMAVGDPYRDDSVDQDSIGQPPQRTESVGNMQPACETHAVQDITTSSRIELPADFKDQFLW.

The segment at residues 10 to 37 (CKTCRSRKQKCDGIRPACSRCRSLGLQC) is a DNA-binding region (zn(2)-C6 fungal-type). The disordered stretch occupies residues 162-216 (ESSSGNADYQHEDEVQSPAGAGDDMAVGDPYRDDSVDQDSIGQPPQRTESVGNMQ). Positions 199–214 (QDSIGQPPQRTESVGN) are enriched in polar residues.

Its subcellular location is the nucleus. In terms of biological role, transcription factor; part of the gene cluster that mediates the biosynthesis of the mycotoxin fusaproliferin (FUP) that belongs to the class of bicyclic sesterterpenoids. This chain is Transcription factor FUP7, found in Fusarium proliferatum (strain ET1) (Orchid endophyte fungus).